Here is a 703-residue protein sequence, read N- to C-terminus: Elongation factor G (703 aa).

The tr-type G domain occupies 10 to 286; the sequence is NKVRNIGIMA…AVVKFLPSPL (277 aa). GTP-binding positions include 19 to 26, 83 to 87, and 137 to 140; these read AHIDAGKT, DTPGH, and NKLD.

The protein belongs to the TRAFAC class translation factor GTPase superfamily. Classic translation factor GTPase family. EF-G/EF-2 subfamily.

It localises to the cytoplasm. Its function is as follows. Catalyzes the GTP-dependent ribosomal translocation step during translation elongation. During this step, the ribosome changes from the pre-translocational (PRE) to the post-translocational (POST) state as the newly formed A-site-bound peptidyl-tRNA and P-site-bound deacylated tRNA move to the P and E sites, respectively. Catalyzes the coordinated movement of the two tRNA molecules, the mRNA and conformational changes in the ribosome. The sequence is that of Elongation factor G from Nocardioides sp. (strain ATCC BAA-499 / JS614).